Reading from the N-terminus, the 103-residue chain is Large ribosomal subunit protein uL23 (103 aa).

The protein belongs to the universal ribosomal protein uL23 family. As to quaternary structure, part of the 50S ribosomal subunit. Contacts protein L29, and trigger factor when it is bound to the ribosome.

Functionally, one of the early assembly proteins it binds 23S rRNA. One of the proteins that surrounds the polypeptide exit tunnel on the outside of the ribosome. Forms the main docking site for trigger factor binding to the ribosome. In Prochlorococcus marinus (strain NATL1A), this protein is Large ribosomal subunit protein uL23.